The sequence spans 133 residues: ATP synthase epsilon chain, chloroplastic (133 aa).

Belongs to the ATPase epsilon chain family. As to quaternary structure, F-type ATPases have 2 components, CF(1) - the catalytic core - and CF(0) - the membrane proton channel. CF(1) has five subunits: alpha(3), beta(3), gamma(1), delta(1), epsilon(1). CF(0) has three main subunits: a, b and c.

Its subcellular location is the plastid. It localises to the chloroplast thylakoid membrane. Functionally, produces ATP from ADP in the presence of a proton gradient across the membrane. This is ATP synthase epsilon chain, chloroplastic from Mesostigma viride (Green alga).